A 122-amino-acid polypeptide reads, in one-letter code: Large ribosomal subunit protein uL14 (122 aa).

The protein belongs to the universal ribosomal protein uL14 family. In terms of assembly, part of the 50S ribosomal subunit. Forms a cluster with proteins L3 and L19. In the 70S ribosome, L14 and L19 interact and together make contacts with the 16S rRNA in bridges B5 and B8.

Binds to 23S rRNA. Forms part of two intersubunit bridges in the 70S ribosome. This chain is Large ribosomal subunit protein uL14, found in Chlorobium chlorochromatii (strain CaD3).